A 121-amino-acid chain; its full sequence is Non-structural protein 8 (121 aa).

The signal sequence occupies residues 1–15 (MKLLIVFGLLTSVYC). In terms of domain architecture, SARS ORF8 Ig-like spans 19–121 (ECSIQECCEN…HDVRVVLDFI (103 aa)). Intrachain disulfides connect C25–C90, C37–C102, and C61–C83.

The sequence is that of Non-structural protein 8 from Rhinolophus macrotis (Big-eared horseshoe bat).